The sequence spans 173 residues: Photosystem I assembly protein Ycf3 (173 aa).

3 TPR repeats span residues alanine 35–proline 68, serine 72–leucine 105, and glycine 120–asparagine 153.

The protein belongs to the Ycf3 family.

The protein resides in the plastid. Its subcellular location is the chloroplast thylakoid membrane. Essential for the assembly of the photosystem I (PSI) complex. May act as a chaperone-like factor to guide the assembly of the PSI subunits. The protein is Photosystem I assembly protein Ycf3 of Cyanidium caldarium (Red alga).